A 947-amino-acid polypeptide reads, in one-letter code: DNA mismatch repair protein MutS 2 (947 aa).

Residues 623 to 643 (IPNDTHLGSGPVPASRDGSDD) are disordered. ATP is bound at residue 659–666 (GPNMSGKS). Residues 841 to 916 (AETADTGVEA…GAAAEDELPE (76 aa)) are disordered.

The protein belongs to the DNA mismatch repair MutS family.

This protein is involved in the repair of mismatches in DNA. It is possible that it carries out the mismatch recognition step. This protein has a weak ATPase activity. This is DNA mismatch repair protein MutS 2 from Haloarcula marismortui (strain ATCC 43049 / DSM 3752 / JCM 8966 / VKM B-1809) (Halobacterium marismortui).